A 286-amino-acid chain; its full sequence is tRNA dimethylallyltransferase (286 aa).

Positions 18–21 (DSMQ) are interaction with substrate tRNA.

It belongs to the IPP transferase family. In terms of assembly, monomer. It depends on Mg(2+) as a cofactor.

The catalysed reaction is adenosine(37) in tRNA + dimethylallyl diphosphate = N(6)-dimethylallyladenosine(37) in tRNA + diphosphate. Functionally, catalyzes the transfer of a dimethylallyl group onto the adenine at position 37 in tRNAs that read codons beginning with uridine, leading to the formation of N6-(dimethylallyl)adenosine (i(6)A). The protein is tRNA dimethylallyltransferase of Tropheryma whipplei (strain TW08/27) (Whipple's bacillus).